The following is a 183-amino-acid chain: Mid1-interacting protein 1 (183 aa).

The residue at position 1 (Met-1) is an N-acetylmethionine. Ser-75 and Ser-79 each carry phosphoserine.

It belongs to the SPOT14 family. Homodimer in the absence of THRSP. Heterodimer with THRSP. The homodimer interacts with ACACA and ACACB. Promotes polymerization of Acetyl-CoA carboxylase to form complexes that contain MID1IP1 and ACACA and/or ACACB. Interaction with THRSP interferes with ACACA binding.

It is found in the nucleus. It localises to the cytoplasm. The protein resides in the cytoskeleton. In terms of biological role, plays a role in the regulation of lipogenesis in liver. Up-regulates ACACA enzyme activity. Required for efficient lipid biosynthesis, including triacylglycerol, diacylglycerol and phospholipid. Involved in stabilization of microtubules. The chain is Mid1-interacting protein 1 (MID1IP1) from Homo sapiens (Human).